The chain runs to 279 residues: Acetylglutamate kinase (279 aa).

Substrate-binding positions include 64 to 65, R86, and N177; that span reads GG.

The protein belongs to the acetylglutamate kinase family. ArgB subfamily.

It localises to the cytoplasm. It catalyses the reaction N-acetyl-L-glutamate + ATP = N-acetyl-L-glutamyl 5-phosphate + ADP. It functions in the pathway amino-acid biosynthesis; L-arginine biosynthesis; N(2)-acetyl-L-ornithine from L-glutamate: step 2/4. Catalyzes the ATP-dependent phosphorylation of N-acetyl-L-glutamate. In Campylobacter jejuni subsp. jejuni serotype O:6 (strain 81116 / NCTC 11828), this protein is Acetylglutamate kinase.